A 155-amino-acid polypeptide reads, in one-letter code: S-ribosylhomocysteine lyase (155 aa).

Fe cation-binding residues include histidine 53, histidine 57, and cysteine 121.

This sequence belongs to the LuxS family. As to quaternary structure, homodimer. The cofactor is Fe cation.

It carries out the reaction S-(5-deoxy-D-ribos-5-yl)-L-homocysteine = (S)-4,5-dihydroxypentane-2,3-dione + L-homocysteine. Functionally, involved in the synthesis of autoinducer 2 (AI-2) which is secreted by bacteria and is used to communicate both the cell density and the metabolic potential of the environment. The regulation of gene expression in response to changes in cell density is called quorum sensing. Catalyzes the transformation of S-ribosylhomocysteine (RHC) to homocysteine (HC) and 4,5-dihydroxy-2,3-pentadione (DPD). The protein is S-ribosylhomocysteine lyase of Thermus thermophilus (strain ATCC BAA-163 / DSM 7039 / HB27).